Reading from the N-terminus, the 489-residue chain is IPT/TIG domain-containing protein BACOVA_02650 (489 aa).

Positions 1-27 (MKSIYKYLDTRLFLIGLLVLPFLAVVS) are cleaved as a signal peptide. Residue Cys-28 is the site of N-palmitoyl cysteine attachment. Cys-28 carries the S-diacylglycerol cysteine lipid modification. IPT/TIG domains are found at residues 57 to 103 (VNPG…PNEL), 136 to 204 (PYIT…TAPA), and 232 to 304 (PVVT…AIGG).

The protein resides in the cell outer membrane. It participates in glucan metabolism; xyloglucan degradation. In terms of biological role, polysaccharide-binding protein present at the surface of the cell. Probably mediates xyloglucan-binding before xyloglucan transport in the periplasm for degradation. The sequence is that of IPT/TIG domain-containing protein BACOVA_02650 from Bacteroides ovatus (strain ATCC 8483 / DSM 1896 / JCM 5824 / BCRC 10623 / CCUG 4943 / NCTC 11153).